A 432-amino-acid chain; its full sequence is Mitochondrial distribution and morphology protein 12 (432 aa).

The SMP-LTD domain maps to 1 to 432 (MSIEVDWRAA…VFPSFWTFLI (432 aa)). 2 disordered regions span residues 182 to 273 (WTDP…PRMR) and 354 to 377 (QQEA…PKRQ). Positions 214-234 (TSNPTSRPSTSSTLPSHPSAS) are enriched in low complexity. Composition is skewed to basic and acidic residues over residues 243-253 (TGKEHGSLAED) and 355-364 (QEARGQDDRP).

The protein belongs to the MDM12 family. Component of the ER-mitochondria encounter structure (ERMES) or MDM complex, composed of mmm1, mdm10, mdm12 and mdm34. A mmm1 homodimer associates with one molecule of mdm12 on each side in a pairwise head-to-tail manner, and the SMP-LTD domains of mmm1 and mdm12 generate a continuous hydrophobic tunnel for phospholipid trafficking.

The protein localises to the mitochondrion outer membrane. It is found in the endoplasmic reticulum membrane. In terms of biological role, component of the ERMES/MDM complex, which serves as a molecular tether to connect the endoplasmic reticulum (ER) and mitochondria. Components of this complex are involved in the control of mitochondrial shape and protein biogenesis, and function in nonvesicular lipid trafficking between the ER and mitochondria. Mdm12 is required for the interaction of the ER-resident membrane protein MMM1 and the outer mitochondrial membrane-resident beta-barrel protein mdm10. The mdm12-mmm1 subcomplex functions in the major beta-barrel assembly pathway that is responsible for biogenesis of all mitochondrial outer membrane beta-barrel proteins, and acts in a late step after the SAM complex. The mdm10-mdm12-mmm1 subcomplex further acts in the TOM40-specific pathway after the action of the mdm12-mmm1 complex. Essential for establishing and maintaining the structure of mitochondria and maintenance of mtDNA nucleoids. The sequence is that of Mitochondrial distribution and morphology protein 12 from Aspergillus flavus (strain ATCC 200026 / FGSC A1120 / IAM 13836 / NRRL 3357 / JCM 12722 / SRRC 167).